A 106-amino-acid polypeptide reads, in one-letter code: uncharacterized protein (106 aa).

4 helical membrane-spanning segments follow: residues 3-23 (WFLLVIAGIEEIIAAIAMKYI), 29-49 (KWPIIVMTVGFGLSFYCLSQA), 50-70 (MIVLPAGVAYAVWTGIGSIGV), and 82-102 (FQLSQVISLCLILAGVIGLRL).

This sequence belongs to the drug/metabolite transporter (DMT) superfamily. Small multidrug resistance (SMR) (TC 2.A.7.1) family.

The protein localises to the cell membrane. This is an uncharacterized protein from Bacillus subtilis (strain 168).